Consider the following 130-residue polypeptide: Small ribosomal subunit protein uS9 (130 aa).

The protein belongs to the universal ribosomal protein uS9 family.

This chain is Small ribosomal subunit protein uS9, found in Clostridium perfringens (strain ATCC 13124 / DSM 756 / JCM 1290 / NCIMB 6125 / NCTC 8237 / Type A).